The following is a 373-amino-acid chain: Type II secretion system protein L (373 aa).

Residues 1 to 214 (MTAWRDTLGR…RRSDPMQRWN (214 aa)) are Cytoplasmic-facing. The chain crosses the membrane as a helical span at residues 215–233 (LLLAVAALVLLAVAGWLLL). Residues 234-373 (DNRRQAADDL…AKEAADAAQR (140 aa)) are Periplasmic-facing.

It belongs to the GSP L family. Type II secretion system is composed of four main components: the outer membrane complex, the inner membrane complex, the cytoplasmic secretion ATPase and the periplasm-spanning pseudopilus. Forms homodimers. Interacts with XpsM/GspM. Interacts with XpsE/GspE and XpsF/GspF.

The protein resides in the cell inner membrane. Functionally, inner membrane component of the type II secretion system required for the energy-dependent secretion of extracellular factors such as proteases and toxins from the periplasm. Plays a role in the complex assembly and recruits XpsM resulting in a stable complex in the inner membrane. Provides thus a link between the energy-providing XpsE protein in the cytoplasm and the rest of the T2SS machinery. The sequence is that of Type II secretion system protein L (pefL) from Xanthomonas campestris pv. campestris (strain ATCC 33913 / DSM 3586 / NCPPB 528 / LMG 568 / P 25).